The following is a 122-amino-acid chain: Large ribosomal subunit protein uL14 (122 aa).

The protein belongs to the universal ribosomal protein uL14 family. In terms of assembly, part of the 50S ribosomal subunit. Forms a cluster with proteins L3 and L19. In the 70S ribosome, L14 and L19 interact and together make contacts with the 16S rRNA in bridges B5 and B8.

Its function is as follows. Binds to 23S rRNA. Forms part of two intersubunit bridges in the 70S ribosome. The sequence is that of Large ribosomal subunit protein uL14 from Chlamydia pneumoniae (Chlamydophila pneumoniae).